The primary structure comprises 455 residues: GTPase Der (455 aa).

2 EngA-type G domains span residues 4–169 (PVVA…PPKD) and 178–353 (IQMA…EQHR). GTP is bound by residues 10–17 (GRPNVGKS), 57–61 (DTGGL), 120–123 (NKCE), 184–191 (GRPNVGKS), 231–235 (DTAGI), and 296–299 (NKWD). Residues 354-439 (RRVSTSVVNE…PVKLYWRGKQ (86 aa)) enclose the KH-like domain.

This sequence belongs to the TRAFAC class TrmE-Era-EngA-EngB-Septin-like GTPase superfamily. EngA (Der) GTPase family. Associates with the 50S ribosomal subunit.

Its function is as follows. GTPase that plays an essential role in the late steps of ribosome biogenesis. This is GTPase Der from Parasynechococcus marenigrum (strain WH8102).